The chain runs to 289 residues: Four and a half LIM domains protein 3 (289 aa).

Serine 2 carries the N-acetylserine modification. The segment at 7–31 adopts a C4-type zinc-finger fold; it reads CAKCNESLYGRKYIQTDSGPYCVPC. LIM zinc-binding domains follow at residues 40–92 and 101–153; these read CAEC…CNEC and CSAC…CVPC. Lysine 157 is modified (N6-acetyllysine). LIM zinc-binding domains lie at 162-212 and 221-275; these read CARC…CVAC and CSSC…FVPD. Lysine 244 is subject to N6-acetyllysine.

As to quaternary structure, interacts with SOX15; the interaction recruits FHL3 to FOXK1 promoters where it acts as a transcriptional coactivator of FOXK1. In terms of tissue distribution, expressed in myogenic progenitor cells (at protein level). Expressed in skeletal striated muscle and the heart. Expressed to a lesser extent, in lung, and kidney. Expressed in skin and skeletal muscles such as the masseter, tongue, tibialis anterior and plantar muscles.

The protein resides in the nucleus. It localises to the cytoplasm. Recruited by SOX15 to FOXK1 promoters where it acts as a transcriptional coactivator of FOXK1. The chain is Four and a half LIM domains protein 3 (Fhl3) from Mus musculus (Mouse).